A 476-amino-acid polypeptide reads, in one-letter code: MVNYFEIFLYISMFVLGYLSYYFCFGKNNNSSSKKNAYKLPPGSMGWPYIGETLQLYSQDPNAFFINRQRRFGEIFKTKILGCPCVMLASPEAARFVLVNQANLFKPTYPKSKENLIGQSAIFFHQGDYHNHLRKLVQAPLNPESIRNQIPYIEELSISALNSWVGGHVVNTYHEMKKFSFEVGILAIFGHLDGHVKEELKKNYSIVDKGYNSFPINLPGTLYRKALQARKKLGKILSEIIREMKEKKTLEKGLLSCFLNAKEEKGFLVLNEDQIADNIIGVLFAAQDTTASVLTWIIKYLHDNPKLLECVKAEQKVIWQSNEQENHGLTWTQTRKMPITSRVVLETLRMASIISFAFREAVADVEYKGYLIPKGWKVMPLFRNIHHNPEFFPDPQKFDPSRFENAPKPNTFMPFGSGVHACPGNELAKLEILIMTHHLVTKFRWEVVGSGSGIQYGPFPVPLGGLAARFWKTTST.

A helical membrane pass occupies residues 5 to 25 (FEIFLYISMFVLGYLSYYFCF). A heme-binding site is contributed by C422.

Belongs to the cytochrome P450 family. Heme serves as cofactor. As to expression, expressed in ovaries (specifically in ovules and placenta), sepals, petals and pedicels.

The protein resides in the membrane. The enzyme catalyses 2-cis-(+)-abscisate + reduced [NADPH--hemoprotein reductase] + O2 = (+)-8'-hydroxyabscisate + oxidized [NADPH--hemoprotein reductase] + H2O + H(+). It participates in plant hormone degradation; abscisic acid degradation. Its function is as follows. Involved in the oxidative degradation of abscisic acid, especially in pollinated ovaries. The polypeptide is Abscisic acid 8'-hydroxylase CYP707A1 (Solanum lycopersicum (Tomato)).